An 88-amino-acid polypeptide reads, in one-letter code: Small ribosomal subunit protein bS18 (88 aa).

The disordered stretch occupies residues 1 to 26; that stretch reads MAFAQSGGAGGGGGQRRPFFRRRKTC.

Belongs to the bacterial ribosomal protein bS18 family. In terms of assembly, part of the 30S ribosomal subunit. Forms a tight heterodimer with protein bS6.

Its function is as follows. Binds as a heterodimer with protein bS6 to the central domain of the 16S rRNA, where it helps stabilize the platform of the 30S subunit. The chain is Small ribosomal subunit protein bS18 from Xanthobacter autotrophicus (strain ATCC BAA-1158 / Py2).